A 690-amino-acid chain; its full sequence is Heterogeneous nuclear ribonucleoprotein M (690 aa).

Residues 1-13 show a composition bias toward low complexity; it reads MAAGVEAAAEVAA. The segment at 1–63 is disordered; it reads MAAGVEAAAE…KRGGNRFEPY (63 aa). An N-acetylalanine modification is found at Ala-2. A Glycyl lysine isopeptide (Lys-Gly) (interchain with G-Cter in SUMO2) cross-link involves residue Lys-17. Phosphoserine is present on Ser-29. Glycyl lysine isopeptide (Lys-Gly) (interchain with G-Cter in SUMO2) cross-links involve residues Lys-37, Lys-68, and Lys-82. The segment covering 37 to 49 has biased composition (basic and acidic residues); the sequence is KGEERPTQNEKRK. 2 consecutive RRM domains span residues 70 to 148 and 164 to 241; these read YRAF…EDPD and STVF…MDER. Phosphoserine is present on Ser-85. Glycyl lysine isopeptide (Lys-Gly) (interchain with G-Cter in SUMO2) cross-links involve residues Lys-87 and Lys-126. Lys-133 carries the N6-acetyllysine; alternate modification. A Glycyl lysine isopeptide (Lys-Gly) (interchain with G-Cter in SUMO2); alternate cross-link involves residue Lys-133. Glycyl lysine isopeptide (Lys-Gly) (interchain with G-Cter in SUMO2) cross-links involve residues Lys-142 and Lys-144. Ser-164 is subject to Phosphoserine. Residue Lys-181 forms a Glycyl lysine isopeptide (Lys-Gly) (interchain with G-Cter in SUMO2) linkage. Lys-237 carries the post-translational modification N6-acetyllysine; alternate. Residue Lys-237 forms a Glycyl lysine isopeptide (Lys-Gly) (interchain with G-Cter in SUMO2); alternate linkage. Residues Lys-245 and Lys-305 each participate in a glycyl lysine isopeptide (Lys-Gly) (interchain with G-Cter in SUMO2) cross-link. Ser-325 and Ser-337 each carry phosphoserine. Residues Lys-341 and Lys-348 each participate in a glycyl lysine isopeptide (Lys-Gly) (interchain with G-Cter in SUMO2) cross-link. Residue Ser-357 is modified to Phosphoserine. 4 tandem repeats follow at residues 360–365, 367–372, 375–380, and 386–391. A 27 X 6 AA repeats of [GEVSTPAN]-[ILMV]-[DE]-[RH]-[MLVI]-[GAV] region spans residues 360 to 568; sequence GIERMGPGID…ALGAGIERMG (209 aa). Ser-392 is subject to Phosphoserine. Repeat copies occupy residues 393-398, 400-405, and 406-411. Position 412 is a phosphoserine (Ser-412). Repeat copies occupy residues 413 to 418, 421 to 426, 428 to 433, and 435 to 440. Residue Ser-428 is modified to Phosphoserine. Ser-441 bears the Phosphoserine mark. Tandem repeats lie at residues 442-447, 453-458, 460-465, 467-472, 474-479, 481-486, 488-493, 500-505, 507-512, 514-519, 522-527, 528-532, 535-540, 541-545, 548-553, and 563-568. An Omega-N-methylarginine modification is found at Arg-456. Residue Ser-488 is modified to Phosphoserine. Ser-535 is subject to Phosphoserine. Ser-548 carries the post-translational modification Phosphoserine. Phosphoserine is present on residues Ser-578, Ser-593, and Ser-597. Lys-611 is covalently cross-linked (Glycyl lysine isopeptide (Lys-Gly) (interchain with G-Cter in SUMO2)). Residues 613-689 form the RRM 3 domain; it reads CQIFVRNLPF…REIDVRIDRN (77 aa). A Phosphothreonine modification is found at Thr-625. Lys-627 is covalently cross-linked (Glycyl lysine isopeptide (Lys-Gly) (interchain with G-Cter in SUMO2)). N6-acetyllysine is present on Lys-632. Residues Lys-645 and Lys-652 each participate in a glycyl lysine isopeptide (Lys-Gly) (interchain with G-Cter in SUMO2) cross-link. Lys-658 is subject to N6-acetyllysine; alternate. Lys-658 participates in a covalent cross-link: Glycyl lysine isopeptide (Lys-Gly) (interchain with G-Cter in SUMO2); alternate. Lys-658 participates in a covalent cross-link: Glycyl lysine isopeptide (Lys-Gly) (interchain with G-Cter in SUMO1); alternate. Ser-661 is modified (phosphoserine). Lys-676 participates in a covalent cross-link: Glycyl lysine isopeptide (Lys-Gly) (interchain with G-Cter in SUMO2).

Identified in the spliceosome C complex. Interacts with PPIA/CYPA. In terms of processing, sumoylated. In terms of tissue distribution, expressed in all tissues tested, including liver, heart, lung, skeletal muscle, kidney, stomach, large intestine, small intestine, pancreas, spleen, peritoneal macrophage and thyroid.

Its subcellular location is the nucleus matrix. In terms of biological role, pre-mRNA binding protein, binds avidly to poly(G) and poly(U) RNA homopolymers. Involved in splicing. Acts as a receptor for carcinoembryonic antigen in Kupffer cells, may initiate a series of signaling events leading to tyrosine phosphorylation of proteins and induction of IL-1 alpha, IL-6, IL-10 and tumor necrosis factor alpha cytokines. The sequence is that of Heterogeneous nuclear ribonucleoprotein M (Hnrnpm) from Rattus norvegicus (Rat).